The chain runs to 387 residues: Formate-dependent phosphoribosylglycinamide formyltransferase (387 aa).

N(1)-(5-phospho-beta-D-ribosyl)glycinamide is bound by residues glutamate 15–leucine 16 and glutamate 75. ATP contacts are provided by residues arginine 106, lysine 147, serine 152–glutamine 157, glutamate 187–isoleucine 190, and glutamate 195. The 191-residue stretch at aspartate 111–leucine 301 folds into the ATP-grasp domain. Positions 260 and 272 each coordinate Mg(2+). Residues aspartate 279, lysine 349, and arginine 356 to arginine 357 each bind N(1)-(5-phospho-beta-D-ribosyl)glycinamide.

Belongs to the PurK/PurT family. In terms of assembly, homodimer.

It catalyses the reaction N(1)-(5-phospho-beta-D-ribosyl)glycinamide + formate + ATP = N(2)-formyl-N(1)-(5-phospho-beta-D-ribosyl)glycinamide + ADP + phosphate + H(+). It functions in the pathway purine metabolism; IMP biosynthesis via de novo pathway; N(2)-formyl-N(1)-(5-phospho-D-ribosyl)glycinamide from N(1)-(5-phospho-D-ribosyl)glycinamide (formate route): step 1/1. Functionally, involved in the de novo purine biosynthesis. Catalyzes the transfer of formate to 5-phospho-ribosyl-glycinamide (GAR), producing 5-phospho-ribosyl-N-formylglycinamide (FGAR). Formate is provided by PurU via hydrolysis of 10-formyl-tetrahydrofolate. This chain is Formate-dependent phosphoribosylglycinamide formyltransferase, found in Prochlorococcus marinus (strain NATL2A).